The sequence spans 809 residues: MQFPESWLRTFVDPQLTTDELSHALTMAGLEVESLSKAAPPTSKIVVGRVLEVVKHPDADKLNVCQVDAGTGATLNIVCGAPNVAPGIKVPVALVGAELPPAEEGGKPFAIKLSKLRGVESQGMLCSARELKLSEDHSGLLVLPEDTPVGQDIRETLNLDDTIFEIKLTPNKADCLSVFGIARETAAITGAPLTPVDIRPVRVELDETLPVRIAAPDLCGRFSGRVIRGVNAHAKTPQWMVERLARSGQRSVSALVDISNYVMFELGRPSHVFDLDKIHGGIEVRWGKRGESLKLLNGNTVELDETVGVISDGRQVESLAGIMGGDSTAVTLDTTNIYLEAAFWWPDSIRGRARKYNFSTDAAHRFERGVDYATTVEHVERITQLILEICGGKAGPVDDQSVNLPQRAPVKMRVSRANRIIGVQIGADEIASIFTRLGLPFEREDDAFLVTPPSHRFDIEIEEDLIEEVARIYGFEKIPARPPVATSEMRATNETRRSIHDIRHALAARDYAETVNFSFVDAEWEQDFAGNDHPIRLLNPIASQLSVMRTTLFGSLISVLRHNLNRRADRVRLFEAGRVFLTDAASKAGELTVEGYVQPKRVGALAYGPALDEQWGAETRPVDFFDVKGDLEALLAPAAARFVKAEHPALHPGRSARIEVDGRAVGWIGELHPRLMQKYELPHAPVMFEVDADALIARALPAPTDVSKFPPVRRDIAVVVDQAVEVQALFDEMKKALAEEACRFVQKVVLFDEFRAKSNTSGGLAAHEKSLAFRVTLQDAAGTLQDEVVDQAIQTLVERMARAGARLRG.

Residues alanine 39 to arginine 154 form the tRNA-binding domain. Positions proline 405–alanine 480 constitute a B5 domain. Positions 458, 464, 467, and 468 each coordinate Mg(2+). The 102-residue stretch at serine 707–arginine 808 folds into the FDX-ACB domain.

Belongs to the phenylalanyl-tRNA synthetase beta subunit family. Type 1 subfamily. Tetramer of two alpha and two beta subunits. It depends on Mg(2+) as a cofactor.

The protein localises to the cytoplasm. The enzyme catalyses tRNA(Phe) + L-phenylalanine + ATP = L-phenylalanyl-tRNA(Phe) + AMP + diphosphate + H(+). This Burkholderia lata (strain ATCC 17760 / DSM 23089 / LMG 22485 / NCIMB 9086 / R18194 / 383) protein is Phenylalanine--tRNA ligase beta subunit.